A 176-amino-acid chain; its full sequence is DNA repair RAD52-like protein 1, mitochondrial (176 aa).

The transit peptide at 1 to 37 (MAGLGLRLKAAKWTLRSGSGAVSREWSSEMGKGVRRF) directs the protein to the mitochondrion.

This sequence belongs to the RAD52 family. Interacts with WHY2. In terms of tissue distribution, expressed in root vascular tissue, tips of primary and secondary roots, young leaves, hydathodes, stomatal guard cells, cauline leaves, flower buds, stipules, carpels, pistils and anther filaments.

The protein localises to the mitochondrion. Its subcellular location is the nucleus. In terms of biological role, plant-specific single-stranded DNA-binding protein required for efficient heterologous recombination-dependent DNA repair in nuclear and mitochondrial compartments. Forms large nucleo-protein complexes with WHY2 in mitochondria. Binds ssDNA with high affinity, but with little sequence specificity. Involved in double-stranded DNA break repair. Involved in the hydrolytic splicing pathway in mitochondrion. Facilitates the excision of two cis-spliced group II introns, NAD1 intron 2 and NAD2 intron 1. The chain is DNA repair RAD52-like protein 1, mitochondrial from Arabidopsis thaliana (Mouse-ear cress).